A 749-amino-acid chain; its full sequence is Catalase-peroxidase 2 (749 aa).

An N-terminal signal peptide occupies residues 1–27; it reads MFKRTIPLFAAFTLAISPSVFPNYAYA. Positions 107 to 229 form a cross-link, tryptophyl-tyrosyl-methioninium (Trp-Tyr) (with M-255); it reads WHAAGTYRIY…LAATVMGLIY (123 aa). Catalysis depends on His-108, which acts as the Proton acceptor. The tryptophyl-tyrosyl-methioninium (Tyr-Met) (with W-107) cross-link spans 229-255; it reads YVNPEGPNGVPDPLAAAEKIRETFGRM. His-270 is a heme b binding site.

Belongs to the peroxidase family. Peroxidase/catalase subfamily. Homodimer or homotetramer. It depends on heme b as a cofactor. Post-translationally, formation of the three residue Trp-Tyr-Met cross-link is important for the catalase, but not the peroxidase activity of the enzyme.

The catalysed reaction is H2O2 + AH2 = A + 2 H2O. The enzyme catalyses 2 H2O2 = O2 + 2 H2O. Its function is as follows. Bifunctional enzyme with both catalase and broad-spectrum peroxidase activity. The sequence is that of Catalase-peroxidase 2 from Legionella pneumophila (strain Paris).